The following is a 1047-amino-acid chain: Ubiquitin carboxyl-terminal hydrolase 48 (1047 aa).

The 328-residue stretch at 89-416 folds into the USP domain; that stretch reads VGLTNLGATC…NAYMLVYKQQ (328 aa). Cys-98 functions as the Nucleophile in the catalytic mechanism. The Proton acceptor role is filled by His-348. 3 DUSP domains span residues 457–551, 567–697, and 717–830; these read QSVD…RSSL, NQLN…DHDP, and MMAN…RIHD. The tract at residues 609-647 is disordered; the sequence is LEEDEEETKHNNSKINGEKSSPGTKADGVKGDSEDGDGE. Residues 621–631 show a composition bias toward polar residues; the sequence is SKINGEKSSPG. Basic and acidic residues predominate over residues 635 to 647; that stretch reads DGVKGDSEDGDGE. The tract at residues 887-928 is disordered; it reads PEFSVSGSDVEDEKEEPKLDGEKDPDFSQTEGGAKRQKLNDT. Residues 901 to 912 are compositionally biased toward basic and acidic residues; sequence EEPKLDGEKDPD. Positions 961 to 1012 constitute a Ubiquitin-like domain; the sequence is VSANQTLKDLKIQIMHAFSVAPFDQNLSIDGRCLKDDSATLGSLGVIPESII.

It belongs to the peptidase C19 family.

It localises to the cytoplasm. Its subcellular location is the nucleus. The enzyme catalyses Thiol-dependent hydrolysis of ester, thioester, amide, peptide and isopeptide bonds formed by the C-terminal Gly of ubiquitin (a 76-residue protein attached to proteins as an intracellular targeting signal).. Its function is as follows. Recognizes and hydrolyzes the peptide bond at the C-terminal Gly of ubiquitin. Involved in the processing of poly-ubiquitin precursors as well as that of ubiquitinated proteins. The polypeptide is Ubiquitin carboxyl-terminal hydrolase 48 (usp48) (Danio rerio (Zebrafish)).